Consider the following 225-residue polypeptide: Golgi to ER traffic protein 1 (225 aa).

Met-1 is a topological domain (lumenal). A helical transmembrane segment spans residues 2-21 (NWVIIAALFFVIINKLLQYT). The Cytoplasmic segment spans residues 22-107 (SRYQEAWINK…SQSKLFNRLK (86 aa)). The stretch at 37–104 (DISSLSKEYS…AKDSQSKLFN (68 aa)) forms a coiled coil. The chain crosses the membrane as a helical span at residues 108 to 128 (LLTLTLPFMILKLWKGKFIVY). The Lumenal portion of the chain corresponds to 129 to 172 (DIPTKDTFPVIVNGVLSQGLLYIPLLPINFLRGIDPNKHILVPG). The helical transmembrane segment at 173 to 189 (VSLGIWLMALTKTIDTV) threads the bilayer. Over 190-225 (EFIVKQLVFQPVVSKQVKEKTKEKVVELKTTEAELD) the chain is Cytoplasmic.

It belongs to the WRB/GET1 family. As to quaternary structure, component of the Golgi to ER traffic (GET) complex, which is composed of GET1, GET2 and GET3. Within the complex, GET1 and GET2 form a heterotetramer which is stabilized by phosphatidylinositol binding and which binds to the GET3 homodimer.

It localises to the endoplasmic reticulum membrane. It is found in the golgi apparatus membrane. Required for the post-translational delivery of tail-anchored (TA) proteins to the endoplasmic reticulum. Together with GET2, acts as a membrane receptor for soluble GET3, which recognizes and selectively binds the transmembrane domain of TA proteins in the cytosol. The GET complex cooperates with the HDEL receptor ERD2 to mediate the ATP-dependent retrieval of resident ER proteins that contain a C-terminal H-D-E-L retention signal from the Golgi to the ER. The protein is Golgi to ER traffic protein 1 of Vanderwaltozyma polyspora (strain ATCC 22028 / DSM 70294 / BCRC 21397 / CBS 2163 / NBRC 10782 / NRRL Y-8283 / UCD 57-17) (Kluyveromyces polysporus).